We begin with the raw amino-acid sequence, 168 residues long: Phosphopantetheine adenylyltransferase (168 aa).

Residue threonine 14 participates in substrate binding. ATP-binding positions include 14 to 15 and histidine 22; that span reads TF. Lysine 46, leucine 78, and arginine 92 together coordinate substrate. ATP-binding positions include 93 to 95, glutamate 103, and 128 to 134; these read GLR and YSFISSS.

This sequence belongs to the bacterial CoaD family. In terms of assembly, homohexamer. The cofactor is Mg(2+).

The protein localises to the cytoplasm. It catalyses the reaction (R)-4'-phosphopantetheine + ATP + H(+) = 3'-dephospho-CoA + diphosphate. It participates in cofactor biosynthesis; coenzyme A biosynthesis; CoA from (R)-pantothenate: step 4/5. Functionally, reversibly transfers an adenylyl group from ATP to 4'-phosphopantetheine, yielding dephospho-CoA (dPCoA) and pyrophosphate. This is Phosphopantetheine adenylyltransferase from Xanthomonas axonopodis pv. citri (strain 306).